Here is a 63-residue protein sequence, read N- to C-terminus: Venom peptide 2a (63 aa).

An N-terminal signal peptide occupies residues 1–22; sequence MRGTSFILFAVVVILGFLNANA. AXPX repeat units lie at residues 22 to 25, 26 to 29, 32 to 35, 38 to 41, and 44 to 47; these read AEPL, ANPA, ANPD, and ANPE. Residues 23 to 48 constitute a propeptide that is removed on maturation; that stretch reads EPLANPAPLANPDPLANPDPLANPEA. L62 bears the Leucine amide mark.

Expressed by the venom gland.

Its subcellular location is the secreted. The protein localises to the target cell membrane. Functionally, antimicrobial peptide. Shows activities against Gram-positive bacteria (S.aureus MIC=50 uM and 200 ug/ml, and B.subtilis MIC=200 ug/ml), Gram-negative bacterium E.coli (MIC=100 uM and 200 ug/ml) and fungi (B.cinerea MIC=5 uM, S.cerevisiae MIC=128 ug/ml, S.pombe MIC=128 ug/ml, A.nidulans MIC=128 ug/ml, and C.albicans MIC=64-100 uM). Shows cytolytic activity against insect cell lines. Its hemolytic activity is controversial, as Baek and colleagues report no activity while Bea and colleagues note a hemolytic activity. In vivo, peptide injection in the vicinity of the head and thorax of lepidopteran larvae induces feeding disorder followed by death due to starvation. Is weakly lethal when tested on water flies (D.magna), but is not lethal on lady beetles (H.convergens). The polypeptide is Venom peptide 2a (Eumenes pomiformis (Potter wasp)).